The primary structure comprises 339 residues: Ribosomal RNA small subunit methyltransferase C (339 aa).

This sequence belongs to the methyltransferase superfamily. RsmC family. As to quaternary structure, monomer.

Its subcellular location is the cytoplasm. The enzyme catalyses guanosine(1207) in 16S rRNA + S-adenosyl-L-methionine = N(2)-methylguanosine(1207) in 16S rRNA + S-adenosyl-L-homocysteine + H(+). Functionally, specifically methylates the guanine in position 1207 of 16S rRNA in the 30S particle. The chain is Ribosomal RNA small subunit methyltransferase C from Aliivibrio fischeri (strain ATCC 700601 / ES114) (Vibrio fischeri).